Consider the following 320-residue polypeptide: Olfactory receptor 2AT4 (320 aa).

The Extracellular segment spans residues 1–31; the sequence is MDATACNESVDGSPVFYLLGIPSLPETFFLP. N-linked (GlcNAc...) asparagine glycosylation occurs at N7. Residues 32-52 form a helical membrane-spanning segment; it reads VFFIFLLFYLLILMGNALILV. Over 53–62 the chain is Cytoplasmic; that stretch reads AVVAEPSLHK. A helical transmembrane segment spans residues 63 to 83; that stretch reads PMYFFLINLSTLDILFTTTTV. At 84 to 102 the chain is on the extracellular side; that stretch reads PKMLSLFLLGDRFLSFSSC. Cysteines 102 and 184 form a disulfide. The helical transmembrane segment at 103 to 123 threads the bilayer; sequence LLQMYLFQSFTCSEAFILVVM. Over 124–145 the chain is Cytoplasmic; that stretch reads AYDRYVAICHPLHYPVLMNPQT. Residues 146 to 166 traverse the membrane as a helical segment; that stretch reads NATLAASAWLTALLLPIPAVV. Residues 167 to 200 lie on the Extracellular side of the membrane; it reads RTSQMAYNSIAYIYHCFCDHLAVVQASCSDTTPQ. A helical membrane pass occupies residues 201-221; that stretch reads TLMGFCIAMVVSFLPLLLVLL. At 222–245 the chain is on the cytoplasmic side; that stretch reads SYVHILASVLRISSLEGRAKAFST. A helical membrane pass occupies residues 246 to 266; it reads CSSHLLVVGTYYSSIAIAYVA. At 267–276 the chain is on the extracellular side; it reads YRADLPLDFH. The chain crosses the membrane as a helical span at residues 277-297; sequence IMGNVVYAILTPILNPLIYTL. Over 298-320 the chain is Cytoplasmic; sequence RNRDVKAAITKIMSQDPGCDRSI.

This sequence belongs to the G-protein coupled receptor 1 family. In terms of tissue distribution, detected in the keratinocytes of the epidermis (at protein level). Detected in hair follicles in proximal outer root sheath and hair matrix keratinocytes (at protein level).

The protein localises to the cell membrane. In terms of biological role, olfactory receptor. Activated by the synthetic sandalwood odorant sandalore. Endogenous ligand is unknown. The activity of this receptor is probably mediated by G proteins which induce elevation of intracellular Ca(2+), a cAMP-dependent pathway and phosphorylation of MAPK1/ERK2, MAPK3/ERK1 and p38 MAPKs. Activation of OR2AT4 induces proliferation, migration, and re-epithelialization during wound-healing processes of keratinocytes. Stimulation of OR2AT4 by sandalore promotes hair growth by decreasing apoptosis and increasing production of the anagen-prolonging growth factor IGF1 as well as other pathways involving various kinases. The sequence is that of Olfactory receptor 2AT4 from Homo sapiens (Human).